The sequence spans 207 residues: Large ribosomal subunit protein uL4 (207 aa).

Residues 49–78 (HAVKNRSAVSGGGRKPWRQKGTGRARQGSI) form a disordered region.

It belongs to the universal ribosomal protein uL4 family. In terms of assembly, part of the 50S ribosomal subunit.

Functionally, one of the primary rRNA binding proteins, this protein initially binds near the 5'-end of the 23S rRNA. It is important during the early stages of 50S assembly. It makes multiple contacts with different domains of the 23S rRNA in the assembled 50S subunit and ribosome. Its function is as follows. Forms part of the polypeptide exit tunnel. This is Large ribosomal subunit protein uL4 from Streptococcus gordonii (strain Challis / ATCC 35105 / BCRC 15272 / CH1 / DL1 / V288).